Consider the following 103-residue polypeptide: Large ribosomal subunit protein bL21 (103 aa).

This sequence belongs to the bacterial ribosomal protein bL21 family. As to quaternary structure, part of the 50S ribosomal subunit. Contacts protein L20.

Functionally, this protein binds to 23S rRNA in the presence of protein L20. The polypeptide is Large ribosomal subunit protein bL21 (Maridesulfovibrio salexigens (strain ATCC 14822 / DSM 2638 / NCIMB 8403 / VKM B-1763) (Desulfovibrio salexigens)).